The primary structure comprises 461 residues: Porin AaxA (461 aa).

The N-terminal stretch at 1-22 (MSFRSVLLTALLSLSFTTTMQA) is a signal peptide.

It belongs to the OprB family.

It localises to the cell outer membrane. Its function is as follows. Facilitates L-arginine uptake, as part of the AaxABC system. The arginine uptake by the bacterium in the macrophage may be a virulence factor against the host innate immune response. In Chlamydia trachomatis serovar L2 (strain ATCC VR-902B / DSM 19102 / 434/Bu), this protein is Porin AaxA (aaxA).